A 216-amino-acid polypeptide reads, in one-letter code: Co-chaperone protein SBA1 (216 aa).

An N-acetylserine modification is found at Ser2. The CS domain occupies 5 to 108 (VINPQVAWAQ…LESEYWPRLT (104 aa)). 2 consecutive repeats follow at residues 141–156 (AQGM…AGGA) and 160–174 (GGMD…AGGA). The tract at residues 169–216 (GGAGGAGSPDMAQLQQLLAQSGGNLDMGDFKENDEEDEEEEIEPEVKA) is disordered. A compositionally biased stretch (acidic residues) spans 200 to 216 (ENDEEDEEEEIEPEVKA).

This sequence belongs to the p23/wos2 family. As to quaternary structure, interacts with HSP82.

In terms of biological role, acts as a co-chaperone. The polypeptide is Co-chaperone protein SBA1 (SBA1) (Saccharomyces cerevisiae (strain ATCC 204508 / S288c) (Baker's yeast)).